The following is a 399-amino-acid chain: 1-deoxy-D-xylulose 5-phosphate reductoisomerase (399 aa).

T13, G14, S15, I16, and N127 together coordinate NADPH. Residue K128 coordinates 1-deoxy-D-xylulose 5-phosphate. Residue E129 participates in NADPH binding. D153 is a Mn(2+) binding site. 4 residues coordinate 1-deoxy-D-xylulose 5-phosphate: S154, E155, S187, and H210. E155 lines the Mn(2+) pocket. G216 contributes to the NADPH binding site. S223, N228, K229, and E232 together coordinate 1-deoxy-D-xylulose 5-phosphate. Residue E232 participates in Mn(2+) binding.

It belongs to the DXR family. Requires Mg(2+) as cofactor. The cofactor is Mn(2+).

The catalysed reaction is 2-C-methyl-D-erythritol 4-phosphate + NADP(+) = 1-deoxy-D-xylulose 5-phosphate + NADPH + H(+). It participates in isoprenoid biosynthesis; isopentenyl diphosphate biosynthesis via DXP pathway; isopentenyl diphosphate from 1-deoxy-D-xylulose 5-phosphate: step 1/6. Its function is as follows. Catalyzes the NADPH-dependent rearrangement and reduction of 1-deoxy-D-xylulose-5-phosphate (DXP) to 2-C-methyl-D-erythritol 4-phosphate (MEP). In Bordetella petrii (strain ATCC BAA-461 / DSM 12804 / CCUG 43448), this protein is 1-deoxy-D-xylulose 5-phosphate reductoisomerase.